The primary structure comprises 430 residues: Adenylosuccinate synthetase (430 aa).

GTP is bound by residues 12–18 (GDEGKGK) and 40–42 (GHT). The active-site Proton acceptor is the aspartate 13. Residues aspartate 13 and glycine 40 each coordinate Mg(2+). IMP contacts are provided by residues 13 to 16 (DEGK), 38 to 41 (NAGH), threonine 130, arginine 144, glutamine 224, threonine 239, and arginine 303. The Proton donor role is filled by histidine 41. A substrate-binding site is contributed by 299–305 (TVTSRKR). Residues arginine 305, 331–333 (KLD), and 413–415 (STS) each bind GTP.

Belongs to the adenylosuccinate synthetase family. As to quaternary structure, homodimer. Requires Mg(2+) as cofactor.

It localises to the cytoplasm. The enzyme catalyses IMP + L-aspartate + GTP = N(6)-(1,2-dicarboxyethyl)-AMP + GDP + phosphate + 2 H(+). Its pathway is purine metabolism; AMP biosynthesis via de novo pathway; AMP from IMP: step 1/2. Its function is as follows. Plays an important role in the de novo pathway of purine nucleotide biosynthesis. Catalyzes the first committed step in the biosynthesis of AMP from IMP. This Pelagibacter ubique (strain HTCC1062) protein is Adenylosuccinate synthetase.